Here is a 346-residue protein sequence, read N- to C-terminus: Holliday junction branch migration complex subunit RuvB (346 aa).

A large ATPase domain (RuvB-L) region spans residues 1-182 (MSEPARLISP…FGIPVRLSFY (182 aa)). ATP contacts are provided by residues leucine 21, arginine 22, glycine 63, lysine 66, threonine 67, threonine 68, 129–131 (EDF), arginine 172, tyrosine 182, and arginine 219. Threonine 67 is a binding site for Mg(2+). Positions 183–253 (TVEELELIVR…IADEALTRLL (71 aa)) are small ATPAse domain (RuvB-S). The tract at residues 256–346 (NVGFDQLDKR…AQFRLFQEDD (91 aa)) is head domain (RuvB-H). DNA is bound by residues arginine 292, arginine 311, and arginine 316.

Belongs to the RuvB family. As to quaternary structure, homohexamer. Forms an RuvA(8)-RuvB(12)-Holliday junction (HJ) complex. HJ DNA is sandwiched between 2 RuvA tetramers; dsDNA enters through RuvA and exits via RuvB. An RuvB hexamer assembles on each DNA strand where it exits the tetramer. Each RuvB hexamer is contacted by two RuvA subunits (via domain III) on 2 adjacent RuvB subunits; this complex drives branch migration. In the full resolvosome a probable DNA-RuvA(4)-RuvB(12)-RuvC(2) complex forms which resolves the HJ.

The protein localises to the cytoplasm. The catalysed reaction is ATP + H2O = ADP + phosphate + H(+). Its function is as follows. The RuvA-RuvB-RuvC complex processes Holliday junction (HJ) DNA during genetic recombination and DNA repair, while the RuvA-RuvB complex plays an important role in the rescue of blocked DNA replication forks via replication fork reversal (RFR). RuvA specifically binds to HJ cruciform DNA, conferring on it an open structure. The RuvB hexamer acts as an ATP-dependent pump, pulling dsDNA into and through the RuvAB complex. RuvB forms 2 homohexamers on either side of HJ DNA bound by 1 or 2 RuvA tetramers; 4 subunits per hexamer contact DNA at a time. Coordinated motions by a converter formed by DNA-disengaged RuvB subunits stimulates ATP hydrolysis and nucleotide exchange. Immobilization of the converter enables RuvB to convert the ATP-contained energy into a lever motion, pulling 2 nucleotides of DNA out of the RuvA tetramer per ATP hydrolyzed, thus driving DNA branch migration. The RuvB motors rotate together with the DNA substrate, which together with the progressing nucleotide cycle form the mechanistic basis for DNA recombination by continuous HJ branch migration. Branch migration allows RuvC to scan DNA until it finds its consensus sequence, where it cleaves and resolves cruciform DNA. The polypeptide is Holliday junction branch migration complex subunit RuvB (Rhizobium etli (strain CIAT 652)).